Consider the following 592-residue polypeptide: Transmembrane 9 superfamily member 3 (592 aa).

An N-terminal signal peptide occupies residues 1-19 (MRLPTTLLLFIGALIFSGA). The Lumenal portion of the chain corresponds to 20–229 (GTVRSDASDH…SLPHHLEIHW (210 aa)). Residues 230–250 (FSIINSCVTVLLLTGFLATIL) form a helical membrane-spanning segment. Residues 251-302 (MRVLKNDFMKYAQDEEAADDQEETGWKYIHGDVFRFPKNKSLFAASLGSGTQ) lie on the Cytoplasmic side of the membrane. The chain crosses the membrane as a helical span at residues 303–323 (LFTLTIFIFMLSLVGVFYPYN). Residues 324–325 (RG) lie on the Lumenal side of the membrane. Residues 326–346 (ALFTALVVIYALTSGIAGYTA) traverse the membrane as a helical segment. The Cytoplasmic segment spans residues 347–365 (SSFYCQLEGKNWVRNLLLT). The helical transmembrane segment at 366–386 (GGLFCGPLFLTFCFLNTVAIA) threads the bilayer. The Lumenal segment spans residues 387–397 (YSATAALPFGT). The helical transmembrane segment at 398–418 (IIVIVLIWTLVTSPLLVLGGI) threads the bilayer. Residues 419–452 (AGKNSKAEFQAPVRTTKYPREIPPLPWYRSAVPQ) are Cytoplasmic-facing. Residues 453–473 (MAMAGFLPFSAIYIELYYIFA) form a helical membrane-spanning segment. The Lumenal portion of the chain corresponds to 474 to 485 (SVWGHRIYTIYS). Residues 486–506 (ILFIVFIILLIVTAFITVALT) form a helical membrane-spanning segment. At 507-521 (YFQLAAEDHEWWWRS) the chain is on the cytoplasmic side. The helical transmembrane segment at 522 to 542 (FLCGGSTGLFIYAYCLYYYYA) threads the bilayer. Residues 543–553 (RSDMSGFMQTS) lie on the Lumenal side of the membrane. The helical transmembrane segment at 554–574 (FFFGYMACICYGFFLMLGTVG) threads the bilayer. The Cytoplasmic segment spans residues 575 to 592 (FRAALLFVRHIYRSIKCE). An Endoplasmic reticulum export signal motif is present at residues 581 to 586 (FVRHIY). Residues 590-592 (KCE) carry the Golgi retention signal motif.

It belongs to the nonaspanin (TM9SF) (TC 9.A.2) family.

The protein resides in the endosome membrane. The protein localises to the golgi apparatus membrane. This Arabidopsis thaliana (Mouse-ear cress) protein is Transmembrane 9 superfamily member 3.